The sequence spans 107 residues: Ferredoxin 1 (107 aa).

2 consecutive 4Fe-4S ferredoxin-type domains span residues 2-30 and 31-60; these read TFVV…YEGP and NFLV…SEDE. Positions 9 and 17 each coordinate [3Fe-4S] cluster. [4Fe-4S] cluster contacts are provided by Cys-21, Cys-40, Cys-43, and Cys-46. Cys-50 is a binding site for [3Fe-4S] cluster.

[4Fe-4S] cluster serves as cofactor. It depends on [3Fe-4S] cluster as a cofactor.

Its function is as follows. Ferredoxins are iron-sulfur proteins that transfer electrons in a wide variety of metabolic reactions. This chain is Ferredoxin 1, found in Stutzerimonas stutzeri (Pseudomonas stutzeri).